We begin with the raw amino-acid sequence, 193 residues long: Ion-translocating oxidoreductase complex subunit A (193 aa).

The next 6 helical transmembrane spans lie at 5–25 (LLLFVGTVLVNNFVLVKFLGL), 47–67 (FVMTLASICAWLIDTWILIPL), 72–92 (LRTLAFILVIAVVVQFTEMVV), 102–122 (LLGIFLPLITTNCAVLGVALL), 134–154 (ALYGFSAAVGFSLVMVLFAAI), and 171–191 (AIALITAGLMSLAFMGFSGLV).

The protein belongs to the NqrDE/RnfAE family. As to quaternary structure, the complex is composed of six subunits: RnfA, RnfB, RnfC, RnfD, RnfE and RnfG.

Its subcellular location is the cell inner membrane. Part of a membrane-bound complex that couples electron transfer with translocation of ions across the membrane. The sequence is that of Ion-translocating oxidoreductase complex subunit A from Citrobacter koseri (strain ATCC BAA-895 / CDC 4225-83 / SGSC4696).